Consider the following 21-residue polypeptide: Granule-bound starch synthase 1 (21 aa).

It belongs to the glycosyltransferase 1 family. Bacterial/plant glycogen synthase subfamily.

It localises to the plastid. Its subcellular location is the chloroplast. The protein localises to the amyloplast. The catalysed reaction is an NDP-alpha-D-glucose + [(1-&gt;4)-alpha-D-glucosyl](n) = [(1-&gt;4)-alpha-D-glucosyl](n+1) + a ribonucleoside 5'-diphosphate + H(+). The protein operates within glycan biosynthesis; starch biosynthesis. The chain is Granule-bound starch synthase 1 from Secale cereale (Rye).